A 100-amino-acid chain; its full sequence is Large ribosomal subunit protein bL21 (100 aa).

It belongs to the bacterial ribosomal protein bL21 family. As to quaternary structure, part of the 50S ribosomal subunit. Contacts protein L20.

Its function is as follows. This protein binds to 23S rRNA in the presence of protein L20. This is Large ribosomal subunit protein bL21 from Paramagnetospirillum magneticum (strain ATCC 700264 / AMB-1) (Magnetospirillum magneticum).